The following is a 493-amino-acid chain: Glutamyl-tRNA(Gln) amidotransferase subunit A (493 aa).

Residues Lys-78 and Ser-158 each act as charge relay system in the active site. The active-site Acyl-ester intermediate is the Ser-182.

The protein belongs to the amidase family. GatA subfamily. As to quaternary structure, heterotrimer of A, B and C subunits.

It carries out the reaction L-glutamyl-tRNA(Gln) + L-glutamine + ATP + H2O = L-glutaminyl-tRNA(Gln) + L-glutamate + ADP + phosphate + H(+). Functionally, allows the formation of correctly charged Gln-tRNA(Gln) through the transamidation of misacylated Glu-tRNA(Gln) in organisms which lack glutaminyl-tRNA synthetase. The reaction takes place in the presence of glutamine and ATP through an activated gamma-phospho-Glu-tRNA(Gln). The polypeptide is Glutamyl-tRNA(Gln) amidotransferase subunit A (Rickettsia bellii (strain RML369-C)).